Reading from the N-terminus, the 163-residue chain is NADH-quinone oxidoreductase subunit I (163 aa).

2 4Fe-4S ferredoxin-type domains span residues 53 to 83 and 94 to 123; these read LRRY…IEAG and VRYD…EGPN. The [4Fe-4S] cluster site is built by C63, C66, C69, C73, C103, C106, C109, and C113.

Belongs to the complex I 23 kDa subunit family. In terms of assembly, NDH-1 is composed of 14 different subunits. Subunits NuoA, H, J, K, L, M, N constitute the membrane sector of the complex. [4Fe-4S] cluster serves as cofactor.

Its subcellular location is the cell inner membrane. The catalysed reaction is a quinone + NADH + 5 H(+)(in) = a quinol + NAD(+) + 4 H(+)(out). Its function is as follows. NDH-1 shuttles electrons from NADH, via FMN and iron-sulfur (Fe-S) centers, to quinones in the respiratory chain. The immediate electron acceptor for the enzyme in this species is believed to be ubiquinone. Couples the redox reaction to proton translocation (for every two electrons transferred, four hydrogen ions are translocated across the cytoplasmic membrane), and thus conserves the redox energy in a proton gradient. The protein is NADH-quinone oxidoreductase subunit I of Brucella anthropi (strain ATCC 49188 / DSM 6882 / CCUG 24695 / JCM 21032 / LMG 3331 / NBRC 15819 / NCTC 12168 / Alc 37) (Ochrobactrum anthropi).